The following is a 78-amino-acid chain: D-alanyl carrier protein (78 aa).

Residues M1 to K78 enclose the Carrier domain. An O-(pantetheine 4'-phosphoryl)serine modification is found at S36.

The protein belongs to the DltC family. Post-translationally, 4'-phosphopantetheine is transferred from CoA to a specific serine of apo-DCP.

It localises to the cytoplasm. The protein operates within cell wall biogenesis; lipoteichoic acid biosynthesis. In terms of biological role, carrier protein involved in the D-alanylation of lipoteichoic acid (LTA). The loading of thioester-linked D-alanine onto DltC is catalyzed by D-alanine--D-alanyl carrier protein ligase DltA. The DltC-carried D-alanyl group is further transferred to cell membrane phosphatidylglycerol (PG) by forming an ester bond, probably catalyzed by DltD. D-alanylation of LTA plays an important role in modulating the properties of the cell wall in Gram-positive bacteria, influencing the net charge of the cell wall. In Staphylococcus carnosus (strain TM300), this protein is D-alanyl carrier protein.